We begin with the raw amino-acid sequence, 211 residues long: MSKVTYIIKASNDVLNEKTATILITIAKKDFITAAEVREVHPDLGNAVVNSNIGVLIKKGLVEKSGDGLIITGEAQDIISNAATLYAQENAPELLKKRATRKAREITSDMEEDKDLMLKLLDKNGFVLKKVEIYRSNYLAILEKRTNGIRNFEINNNGNMRIFGYKMMEHHIQKFTDIGMSCKIAKNGNVYLDIKRSAENIEAVITVASEL.

Positions 23–42 (LITIAKKDFITAAEVREVHP) form a DNA-binding region, H-T-H motif.

In terms of biological role, required for the transcriptional activation of middle promoters. Middle promoters are characterized by the presence of the conserved sequence [AT]3TGCTTNA (MotA box). MotA binds directly to MotA boxes. This chain is Middle transcription regulatory protein motA (motA), found in Enterobacteria phage T4 (Bacteriophage T4).